We begin with the raw amino-acid sequence, 341 residues long: Anthranilate phosphoribosyltransferase (341 aa).

Residues glycine 79, 82–83 (GD), threonine 87, 89–92 (NIST), 107–115 (KHGNRAVSS), and serine 119 contribute to the 5-phospho-alpha-D-ribose 1-diphosphate site. Glycine 79 provides a ligand contact to anthranilate. Serine 91 contacts Mg(2+). Residue asparagine 110 participates in anthranilate binding. Arginine 165 is a binding site for anthranilate. Positions 224 and 225 each coordinate Mg(2+).

This sequence belongs to the anthranilate phosphoribosyltransferase family. Homodimer. It depends on Mg(2+) as a cofactor.

It carries out the reaction N-(5-phospho-beta-D-ribosyl)anthranilate + diphosphate = 5-phospho-alpha-D-ribose 1-diphosphate + anthranilate. The protein operates within amino-acid biosynthesis; L-tryptophan biosynthesis; L-tryptophan from chorismate: step 2/5. Its function is as follows. Catalyzes the transfer of the phosphoribosyl group of 5-phosphorylribose-1-pyrophosphate (PRPP) to anthranilate to yield N-(5'-phosphoribosyl)-anthranilate (PRA). The chain is Anthranilate phosphoribosyltransferase from Bacillus cereus (strain AH820).